Here is a 231-residue protein sequence, read N- to C-terminus: UPF0758 protein aq_1610 (231 aa).

An MPN domain is found at 110–231 (SIRNPQEAFE…YFSFREEGVL (122 aa)). Positions 180, 182, and 193 each coordinate Zn(2+). The short motif at 180-193 (HNHPQGEPSPSNED) is the JAMM motif element.

It belongs to the UPF0758 family.

This chain is UPF0758 protein aq_1610, found in Aquifex aeolicus (strain VF5).